Here is a 203-residue protein sequence, read N- to C-terminus: Small ribosomal subunit protein uS4c (203 aa).

Residues 15 to 43 form a disordered region; sequence LGSLPGLTSKRPRSGSDLRNQSRSGKRSQ. The 81-residue stretch at 89–169 folds into the S4 RNA-binding domain; it reads MRLDNILFRL…LPKHLTLHSL (81 aa).

It belongs to the universal ribosomal protein uS4 family. As to quaternary structure, part of the 30S ribosomal subunit. Contacts protein S5. The interaction surface between S4 and S5 is involved in control of translational fidelity.

It is found in the plastid. Its subcellular location is the chloroplast. One of the primary rRNA binding proteins, it binds directly to 16S rRNA where it nucleates assembly of the body of the 30S subunit. In terms of biological role, with S5 and S12 plays an important role in translational accuracy. The sequence is that of Small ribosomal subunit protein uS4c (rps4) from Illicium oligandrum (Star anise).